Consider the following 103-residue polypeptide: Pyrimidine/purine nucleoside phosphorylase (103 aa).

It belongs to the nucleoside phosphorylase PpnP family.

It catalyses the reaction a purine D-ribonucleoside + phosphate = a purine nucleobase + alpha-D-ribose 1-phosphate. The enzyme catalyses adenosine + phosphate = alpha-D-ribose 1-phosphate + adenine. The catalysed reaction is cytidine + phosphate = cytosine + alpha-D-ribose 1-phosphate. It carries out the reaction guanosine + phosphate = alpha-D-ribose 1-phosphate + guanine. It catalyses the reaction inosine + phosphate = alpha-D-ribose 1-phosphate + hypoxanthine. The enzyme catalyses thymidine + phosphate = 2-deoxy-alpha-D-ribose 1-phosphate + thymine. The catalysed reaction is uridine + phosphate = alpha-D-ribose 1-phosphate + uracil. It carries out the reaction xanthosine + phosphate = alpha-D-ribose 1-phosphate + xanthine. In terms of biological role, catalyzes the phosphorolysis of diverse nucleosides, yielding D-ribose 1-phosphate and the respective free bases. Can use uridine, adenosine, guanosine, cytidine, thymidine, inosine and xanthosine as substrates. Also catalyzes the reverse reactions. The sequence is that of Pyrimidine/purine nucleoside phosphorylase from Laribacter hongkongensis (strain HLHK9).